The primary structure comprises 440 residues: Gap junction gamma-2 protein (440 aa).

The Cytoplasmic segment spans residues 1-21 (MTNMSWSFLTRLLEEIHNHST). The helical transmembrane segment at 22-42 (FVGKVWLTVLVVFRIVLTAVG) threads the bilayer. At 43-78 (GESIYSDEQSKFTCNTRQPGCDNVCYDAFAPLSHVR) the chain is on the extracellular side. A helical transmembrane segment spans residues 79–99 (FWVFQIVVISTPSVMYLGYAV). The Cytoplasmic segment spans residues 100–223 (HRLARASEQE…AQLVVRAAFE (124 aa)). The disordered stretch occupies residues 108–199 (QERRRALRRR…TPGPAGQHDG (92 aa)). The span at 112 to 124 (RALRRRPGPRRLP) shows a compositional bias: basic residues. The segment covering 150–173 (LEEDEDEEPGAPEGPGEDTEEERT) has biased composition (acidic residues). The helical transmembrane segment at 224 to 244 (VAFLVGQYLLYGFEVPPFFAC) threads the bilayer. The Extracellular segment spans residues 245 to 264 (SRQPCPHVVDCFVSRPTEKT). Residues 265–285 (VFLLVMYVVSCLCLLLNLCEM) form a helical membrane-spanning segment. The Cytoplasmic segment spans residues 286-440 (AHLGLGSAQD…SRDGKATVWI (155 aa)). Residues 368–440 (ADRDSPPCSG…SRDGKATVWI (73 aa)) are disordered. The residue at position 372 (Ser-372) is a Phosphoserine. A compositionally biased stretch (low complexity) spans 380 to 401 (ATSRGPPRAGGPASGTGSATSG).

The protein belongs to the connexin family. Gamma-type subfamily. As to quaternary structure, a connexon is composed of a hexamer of connexins. Interacts with TJP1. In terms of tissue distribution, mainly expressed by oligodendrocytes in the central nervous system. Expressed in optic nerve (at protein level).

Its subcellular location is the cell membrane. The protein resides in the cell junction. It is found in the gap junction. In terms of biological role, one gap junction consists of a cluster of closely packed pairs of transmembrane channels, the connexons, through which materials of low MW diffuse from one cell to a neighboring cell. May play a role in myelination in central and peripheral nervous systems. The polypeptide is Gap junction gamma-2 protein (Gjc2) (Rattus norvegicus (Rat)).